The following is a 370-amino-acid chain: MVSITEQTAILAKYLDLSQNGKVLAEYVWIDADGNSRSKCKTLDKKPSSVEDLPEWNFDGSSTGQAPGHDSDVYLRPVAFYADPFRKGDNIIVLTECWNNDGTPNKFNHRHESAKLMKAHADEEVWFGLEQEYTLFDQFDQPYAWPKGGFPAPQGPYYCGVGTGKVYARDLIEAHYRACLHAGVDISGINAEVMPSQWEFQVGPCEGIQMGDELWIARYLLQRVAEEFGVKVSFHPKPLKGEWNGAGCHTNVSTKSMRLPGGMKSIEVALSKLAKRHKEHMLLYGADNDQRLTGRHETASIEGFSSGVANRGASVRIPRSVAKEGYGYFEDRRPASNIDPYLVTGIMVETICGSIPDADMFKEYARESSD.

A GS beta-grasp domain is found at 23–102 (VLAEYVWIDA…VLTECWNNDG (80 aa)). The disordered stretch occupies residues 40 to 69 (CKTLDKKPSSVEDLPEWNFDGSSTGQAPGH). A GS catalytic domain is found at 109 to 370 (HRHESAKLMK…FKEYARESSD (262 aa)).

Belongs to the glutamine synthetase family. Homooctamer.

The protein resides in the cytoplasm. It carries out the reaction L-glutamate + NH4(+) + ATP = L-glutamine + ADP + phosphate + H(+). This is Glutamine synthetase (GLN1) from Debaryomyces hansenii (strain ATCC 36239 / CBS 767 / BCRC 21394 / JCM 1990 / NBRC 0083 / IGC 2968) (Yeast).